We begin with the raw amino-acid sequence, 86 residues long: Protein YwqI (86 aa).

Positions 57–83 form a coiled coil; it reads DYKKAVQKNIEDTKDNVDSLKEQDEAI.

In Bacillus subtilis (strain 168), this protein is Protein YwqI (ywqI).